Reading from the N-terminus, the 94-residue chain is Large ribosomal subunit protein bL27 (94 aa).

Residues 1–9 (MLKLNLQFF) constitute a propeptide that is removed on maturation. The disordered stretch occupies residues 13–32 (KGLGSTKNGRDSESKRLGAK). Residues 20 to 32 (NGRDSESKRLGAK) show a composition bias toward basic and acidic residues.

It belongs to the bacterial ribosomal protein bL27 family. Post-translationally, the N-terminus is cleaved by ribosomal processing cysteine protease Prp.

The protein is Large ribosomal subunit protein bL27 of Staphylococcus saprophyticus subsp. saprophyticus (strain ATCC 15305 / DSM 20229 / NCIMB 8711 / NCTC 7292 / S-41).